The primary structure comprises 270 residues: NADPH-dependent 7-cyano-7-deazaguanine reductase (270 aa).

79-81 (IES) is a binding site for substrate. 81-82 (SK) is a binding site for NADPH. Catalysis depends on cysteine 177, which acts as the Thioimide intermediate. Aspartate 184 serves as the catalytic Proton donor. 216 to 217 (HE) is a binding site for substrate. 245–246 (RG) is an NADPH binding site.

This sequence belongs to the GTP cyclohydrolase I family. QueF type 2 subfamily. In terms of assembly, homodimer.

The protein resides in the cytoplasm. The enzyme catalyses 7-aminomethyl-7-carbaguanine + 2 NADP(+) = 7-cyano-7-deazaguanine + 2 NADPH + 3 H(+). The protein operates within tRNA modification; tRNA-queuosine biosynthesis. In terms of biological role, catalyzes the NADPH-dependent reduction of 7-cyano-7-deazaguanine (preQ0) to 7-aminomethyl-7-deazaguanine (preQ1). This is NADPH-dependent 7-cyano-7-deazaguanine reductase from Acinetobacter baumannii (strain ATCC 17978 / DSM 105126 / CIP 53.77 / LMG 1025 / NCDC KC755 / 5377).